The chain runs to 149 residues: Large ribosomal subunit protein uL11 (149 aa).

This sequence belongs to the universal ribosomal protein uL11 family. Part of the ribosomal stalk of the 50S ribosomal subunit. Interacts with L10 and the large rRNA to form the base of the stalk. L10 forms an elongated spine to which L12 dimers bind in a sequential fashion forming a multimeric L10(L12)X complex. In terms of processing, one or more lysine residues are methylated.

In terms of biological role, forms part of the ribosomal stalk which helps the ribosome interact with GTP-bound translation factors. The sequence is that of Large ribosomal subunit protein uL11 from Methylobacterium radiotolerans (strain ATCC 27329 / DSM 1819 / JCM 2831 / NBRC 15690 / NCIMB 10815 / 0-1).